Reading from the N-terminus, the 130-residue chain is HTH-type transcriptional repressor YtrA (130 aa).

One can recognise an HTH gntR-type domain in the interval 10-78 (TPIYEQIIQQ…RGRGTYISEN (69 aa)). Residues 38–57 (VRELATIIIANPNTVSKAYK) constitute a DNA-binding region (H-T-H motif).

Negatively regulates ABC transporter complex ytrBCDEF that plays a role in acetoin utilization during stationary phase and sporulation. In Bacillus subtilis (strain 168), this protein is HTH-type transcriptional repressor YtrA (ytrA).